We begin with the raw amino-acid sequence, 150 residues long: Cytochrome c oxidase subunit 5A, mitochondrial (150 aa).

The N-terminal 41 residues, 1 to 41 (MLGAALRRCAVAATTRADPRGLLHSARTPGPAVAIQSVRCY), are a transit peptide targeting the mitochondrion. The SIFI-degron motif lies at 2-17 (LGAALRRCAVAATTRA). N6-acetyllysine is present on residues K87 and K113. Phosphothreonine is present on T141.

This sequence belongs to the cytochrome c oxidase subunit 5A family. In terms of assembly, component of the cytochrome c oxidase (complex IV, CIV), a multisubunit enzyme composed of 14 subunits. The complex is composed of a catalytic core of 3 subunits MT-CO1, MT-CO2 and MT-CO3, encoded in the mitochondrial DNA, and 11 supernumerary subunits COX4I1 (or COX4I2), COX5A, COX5B, COX6A1 (or COX6A2), COX6B1 (or COX6B2), COX6C, COX7A2 (or COX7A1), COX7B, COX7C, COX8A and NDUFA4, which are encoded in the nuclear genome. The complex exists as a monomer or a dimer and forms supercomplexes (SCs) in the inner mitochondrial membrane with NADH-ubiquinone oxidoreductase (complex I, CI) and ubiquinol-cytochrome c oxidoreductase (cytochrome b-c1 complex, complex III, CIII), resulting in different assemblies (supercomplex SCI(1)III(2)IV(1) and megacomplex MCI(2)III(2)IV(2)). Interacts with AFG1L. Interacts with RAB5IF. In terms of processing, in response to mitochondrial stress, the precursor protein is ubiquitinated by the SIFI complex in the cytoplasm before mitochondrial import, leading to its degradation. Within the SIFI complex, UBR4 initiates ubiquitin chain that are further elongated or branched by KCMF1.

It localises to the mitochondrion inner membrane. Its pathway is energy metabolism; oxidative phosphorylation. In terms of biological role, component of the cytochrome c oxidase, the last enzyme in the mitochondrial electron transport chain which drives oxidative phosphorylation. The respiratory chain contains 3 multisubunit complexes succinate dehydrogenase (complex II, CII), ubiquinol-cytochrome c oxidoreductase (cytochrome b-c1 complex, complex III, CIII) and cytochrome c oxidase (complex IV, CIV), that cooperate to transfer electrons derived from NADH and succinate to molecular oxygen, creating an electrochemical gradient over the inner membrane that drives transmembrane transport and the ATP synthase. Cytochrome c oxidase is the component of the respiratory chain that catalyzes the reduction of oxygen to water. Electrons originating from reduced cytochrome c in the intermembrane space (IMS) are transferred via the dinuclear copper A center (CU(A)) of subunit 2 and heme A of subunit 1 to the active site in subunit 1, a binuclear center (BNC) formed by heme A3 and copper B (CU(B)). The BNC reduces molecular oxygen to 2 water molecules using 4 electrons from cytochrome c in the IMS and 4 protons from the mitochondrial matrix. This chain is Cytochrome c oxidase subunit 5A, mitochondrial (COX5A), found in Homo sapiens (Human).